The sequence spans 252 residues: Cilia- and flagella-associated protein 300 (252 aa).

Belongs to the CFAP300 family.

It localises to the cytoplasm. Its subcellular location is the cytoskeleton. It is found in the cilium axoneme. Its function is as follows. Cilium- and flagellum-specific protein that plays a role in axonemal structure organization and motility. Plays a role in outer and inner axonemal dynein arm assembly. The chain is Cilia- and flagella-associated protein 300 from Paramecium tetraurelia.